We begin with the raw amino-acid sequence, 382 residues long: Queuine tRNA-ribosyltransferase (382 aa).

Catalysis depends on D93, which acts as the Proton acceptor. Residues D93–F97, D147, Q191, and G218 contribute to the substrate site. Residues G249 to D255 are RNA binding. Residue D268 is the Nucleophile of the active site. The tract at residues T273–R277 is RNA binding; important for wobble base 34 recognition. Residues C306, C308, C311, and H337 each coordinate Zn(2+).

The protein belongs to the queuine tRNA-ribosyltransferase family. In terms of assembly, homodimer. Within each dimer, one monomer is responsible for RNA recognition and catalysis, while the other monomer binds to the replacement base PreQ1. It depends on Zn(2+) as a cofactor.

It carries out the reaction 7-aminomethyl-7-carbaguanine + guanosine(34) in tRNA = 7-aminomethyl-7-carbaguanosine(34) in tRNA + guanine. It participates in tRNA modification; tRNA-queuosine biosynthesis. Its function is as follows. Catalyzes the base-exchange of a guanine (G) residue with the queuine precursor 7-aminomethyl-7-deazaguanine (PreQ1) at position 34 (anticodon wobble position) in tRNAs with GU(N) anticodons (tRNA-Asp, -Asn, -His and -Tyr). Catalysis occurs through a double-displacement mechanism. The nucleophile active site attacks the C1' of nucleotide 34 to detach the guanine base from the RNA, forming a covalent enzyme-RNA intermediate. The proton acceptor active site deprotonates the incoming PreQ1, allowing a nucleophilic attack on the C1' of the ribose to form the product. After dissociation, two additional enzymatic reactions on the tRNA convert PreQ1 to queuine (Q), resulting in the hypermodified nucleoside queuosine (7-(((4,5-cis-dihydroxy-2-cyclopenten-1-yl)amino)methyl)-7-deazaguanosine). This is Queuine tRNA-ribosyltransferase from Haemophilus influenzae (strain ATCC 51907 / DSM 11121 / KW20 / Rd).